The following is a 452-amino-acid chain: MDDIFTQCREGNAVAVRLWLDNTENDLNQGDDHGFSPLHWACREGRSAVVEMLIMRGARINVMNRGDDTPLHLAASHGHRDIVQKLLQYKADINAVNEHGNVPLHYACFWGQDQVAEDLVANGALVSICNKYGEMPVDKAKAPLRELLRERAEKMGQNLNRIPYKDTFWKGTTRTRPRNGTLNKHSGIDFKQLNFLTKLNENHSGELWKGRWQGNDIVVKVLKVRDWSTRKSRDFNEECPRLRIFSHPNVLPVLGACQSPPAPHPTLITHWMPYGSLYNVLHEGTNFVVDQSQAVKFALDMARGMAFLHTLEPLIPRHALNSRSVMIDEDMTARISMADVKFSFQCPGRMYAPAWVAPEALQKKPEDTNRRSADMWSFAVLLWELVTREVPFADLSNMEIGMKVALEGLRPTIPPGISPHVCKLMKICMNEDPAKRPKFDMIVPILEKMQDK.

At methionine 1 the chain carries N-acetylmethionine. ANK repeat units follow at residues 2–30 (DDIF…LNQG), 31–63 (DDHG…INVM), 64–96 (NRGD…INAV), 97–129 (NEHG…VSIC), and 130–174 (NKYG…GTTR). Positions 33–139 (HGFSPLHWAC…NKYGEMPVDK (107 aa)) are interaction with LIMS1. A Phosphothreonine; by PAK1 modification is found at threonine 173. Positions 180 to 212 (GTLNKHSGIDFKQLNFLTKLNENHSGELWKGRW) are PH-like; mediates interaction with TGFB1I1. Serine 186 carries the post-translational modification Phosphoserine. The 254-residue stretch at 193-446 (LNFLTKLNEN…PKFDMIVPIL (254 aa)) folds into the Protein kinase domain. The ATP site is built by asparagine 200, asparagine 202, histidine 203, serine 204, and lysine 220. Serine 246 is subject to Phosphoserine; by PAK1. Histidine 270, methionine 272, and asparagine 279 together coordinate ATP. Aspartate 339 lines the Mg(2+) pocket. Lysine 341 serves as a coordination point for ATP. A Nuclear localization signal motif is present at residues 363 to 371 (KKPEDTNRR). Residue lysine 426 is modified to N6-acetyllysine.

The protein belongs to the protein kinase superfamily. TKL Ser/Thr protein kinase family. As to quaternary structure, component of the heterotrimeric IPP (ILK-PINCH-PARVIN) complex composed of ILK, LIMS1/PINCH and PARVA; the complex binds to F-actin via the C-terminal tail of LIMS1 and the N-terminal region of PARVA, promoting F-actin filament bundling. Formation of the IPP complex is dependent on protein kinase C and precedes integrin-mediated cell adhesion and spreading. ILK also interacts with LIMS2/PINCH2 and with PARVB and PARVG which may substitute for LIMS1 and PARVA in the IPP complex; PARVA and PARVB compete for the same binding site. Interaction with PARVG promotes the establishment of cell polarity required for leukocyte migration. Interacts with the cytoplasmic domain of integrin ITGB1 and may also interact with integrins ITGB2, ITGB3 and/or ITGB5. Interacts probably also with TGFB1I1. Interacts (via ANK repeats) with EPHA1 (via SAM domain); stimulated by EFNA1 but independent of the kinase activity of EPHA1. Interacts with FERMT2. Interacts with LIMD2; leading to activate the protein kinase activity. Interacts with PXN/PAXILLIN (via LD motif 4). Interacts with CCDC25 (via cytoplasmic region); initiating the ILK-PARVB cascade to induce cytoskeleton rearrangement and directional migration of cells. Interacts with IQGAP1; the interaction is required for localization of IQGAP1 to the cell cortex. In terms of processing, phosphorylation by PAK1 modulates ILK subcellular location by promoting its nuclear export. As to expression, highly expressed in heart followed by skeletal muscle, pancreas and kidney. Weakly expressed in placenta, lung and liver.

The protein resides in the cell junction. It is found in the focal adhesion. It localises to the cell membrane. Its subcellular location is the cell projection. The protein localises to the lamellipodium. The protein resides in the cytoplasm. It is found in the myofibril. It localises to the sarcomere. Its subcellular location is the nucleus. The protein localises to the cytoskeleton. The protein resides in the microtubule organizing center. It is found in the centrosome. It localises to the cell cortex. Functionally, scaffold protein which mediates protein-protein interactions during a range of cellular events including focal adhesion assembly, cell adhesion and cell migration. Regulates integrin-mediated signal transduction by contributing to inside-out integrin activation. Recruits PARVA and LIMS1/PITCH to form the heterotrimeric IPP (ILK-PINCH-PARVIN) complex which binds to F-actin via the C-terminal tail of LIMS1 and the N-terminal region of PARVA, promoting F-actin filament bundling, a process required to generate force for actin cytoskeleton reorganization and subsequent dynamic cell adhesion events such as cell spreading and migration. Binding to PARVA promotes effective assembly of ILK into focal adhesions while PARVA-bound ILK can simultaneously engage integrin-beta cytoplasmic tails to mediate cell adhesion. Plays a role with PARVG in promoting the cell adhesion and spreading of leukocytes. Acts as an upstream effector of both AKT1/PKB and GSK3. Mediates trafficking of caveolae to the cell surface in an ITGB1-dependent manner by promoting the recruitment of IQGAP1 to the cell cortex which cooperates with its effector DIAPH1 to locally stabilize microtubules and allow stable insertion of caveolae into the plasma membrane. Required for the maintenance of mitotic spindle integrity by promoting phosphorylation of TACC3 by AURKA. Associates with chromatin and may act as a negative regulator of transcription when located in the nucleus. The polypeptide is Scaffold protein ILK (Homo sapiens (Human)).